The sequence spans 315 residues: Cysteine proteinase 2 (315 aa).

The N-terminal stretch at 1-13 (MFAFICLLAIASA) is a signal peptide. A propeptide spans 14-93 (IDFNTWASKN…NGQVKYLNIQ (80 aa)) (activation peptide). Disulfide bonds link cysteine 115/cysteine 161 and cysteine 152/cysteine 193. Cysteine 118 is a catalytic residue. Catalysis depends on residues histidine 259 and asparagine 279.

The protein belongs to the peptidase C1 family. As to quaternary structure, interacts with cysteine protease inhibitor ICP1. Interacts with cysteine protease inhibitor ICP2.

It is found in the cell membrane. It localises to the cytoplasmic vesicle. The protein localises to the phagosome. Its subcellular location is the secreted. It catalyses the reaction Hydrolysis of proteins, including basement membrane collagen and azocasein. Preferential cleavage: Arg-Arg-|-Xaa in small molecule substrates including Z-Arg-Arg-|-NHMec.. With respect to regulation, inhibited by cysteine protease inhibitors ICP1 and ICP2. Inhibited by leupeptin and such inhibitors of cysteine proteinases as L-transepoxysuccinyl-L-leucylamido-(4-guanidino)butane, peptidyldiazomethanes, iodoacetic acid and chicken cystatin. Functionally, cysteine protease which degrades matrix proteins such as collagen, laminin and fibronectin and thus is involved in the destruction of human tissue. Can abolish adhesion. May play an important role in pathogenicity. The protein is Cysteine proteinase 2 of Entamoeba histolytica (strain ATCC 30459 / HM-1:IMSS / ABRM).